The primary structure comprises 906 residues: Protein transport protein SEC24-2 (906 aa).

4 residues coordinate Zn(2+): C222, C225, C244, and C247. The zinc finger-like stretch occupies residues 222–247 (CRRCRSYMNPFVTFIEQGRRWRCNFC).

The protein belongs to the SEC23/SEC24 family. SEC24 subfamily. As to quaternary structure, the COPII coat is composed of at least 5 proteins: the SEC23/24 complex, the SEC13/31 complex, and the protein SAR1. Golgi apparatus membrane; Peripheral membrane protein; Cytoplasmic side.

The protein resides in the cytoplasm. The protein localises to the cytoplasmic vesicle. Its subcellular location is the COPII-coated vesicle membrane. It localises to the endoplasmic reticulum membrane. It is found in the golgi apparatus membrane. Component of the coat protein complex II (COPII) which promotes the formation of transport vesicles from the endoplasmic reticulum (ER). The coat has two main functions, the physical deformation of the endoplasmic reticulum membrane into vesicles and the selection of cargo molecules. The protein is Protein transport protein SEC24-2 (SEC242) of Candida glabrata (strain ATCC 2001 / BCRC 20586 / JCM 3761 / NBRC 0622 / NRRL Y-65 / CBS 138) (Yeast).